The primary structure comprises 747 residues: Elongation factor G, mitochondrial (747 aa).

The N-terminal 32 residues, 1–32 (MTLITRVLNSNLPLRLSALKTVRQLQCGYSSH), are a transit peptide targeting the mitochondrion. Residues 42 to 319 (ERIRNIGISA…AIIDYLPNPG (278 aa)) form the tr-type G domain. GTP is bound by residues 51–58 (AHIDSGKT), 118–122 (DTPGH), and 172–175 (NKLD).

Belongs to the TRAFAC class translation factor GTPase superfamily. Classic translation factor GTPase family. EF-G/EF-2 subfamily.

It localises to the mitochondrion. The protein operates within protein biosynthesis; polypeptide chain elongation. Its function is as follows. Mitochondrial GTPase that catalyzes the GTP-dependent ribosomal translocation step during translation elongation. During this step, the ribosome changes from the pre-translocational (PRE) to the post-translocational (POST) state as the newly formed A-site-bound peptidyl-tRNA and P-site-bound deacylated tRNA move to the P and E sites, respectively. Catalyzes the coordinated movement of the two tRNA molecules, the mRNA and conformational changes in the ribosome. Essential during development as it acts as a retrograde signal from mitochondria to the nucleus to slow down cell proliferation if mitochondrial energy output is low. The sequence is that of Elongation factor G, mitochondrial from Drosophila virilis (Fruit fly).